The following is a 398-amino-acid chain: F-box/kelch-repeat protein At1g30090 (398 aa).

The F-box domain maps to 51–98; sequence EPLIPGLPDDVALNCLLRVPVQSHVSSKSVCKRWHLLFGTKETFFAKR. 5 Kelch repeats span residues 106-152, 159-207, 209-255, 257-304, and 305-346; these read PWLF…FRSV, TMFV…VIDG, IYAA…VLNG, LLVT…IYDR, and LFIV…AVNC.

The chain is F-box/kelch-repeat protein At1g30090 from Arabidopsis thaliana (Mouse-ear cress).